Here is a 121-residue protein sequence, read N- to C-terminus: Putative SNURF-like protein (121 aa).

It belongs to the SNURF family.

The polypeptide is Putative SNURF-like protein (SNURFL) (Homo sapiens (Human)).